The primary structure comprises 549 residues: Formate--tetrahydrofolate ligase (549 aa).

60-67 lines the ATP pocket; that stretch reads TPYGEGKT.

This sequence belongs to the formate--tetrahydrofolate ligase family.

It catalyses the reaction (6S)-5,6,7,8-tetrahydrofolate + formate + ATP = (6R)-10-formyltetrahydrofolate + ADP + phosphate. It participates in one-carbon metabolism; tetrahydrofolate interconversion. This Campylobacter concisus (strain 13826) protein is Formate--tetrahydrofolate ligase.